Reading from the N-terminus, the 224-residue chain is UPF0758 protein Maqu_3564 (224 aa).

The MPN domain maps to 102 to 224 (PLRSPADTRR…VISLAERGLM (123 aa)). Positions 173, 175, and 186 each coordinate Zn(2+). The JAMM motif signature appears at 173 to 186 (HNHPSGVAEPSQAD).

Belongs to the UPF0758 family.

This chain is UPF0758 protein Maqu_3564, found in Marinobacter nauticus (strain ATCC 700491 / DSM 11845 / VT8) (Marinobacter aquaeolei).